Reading from the N-terminus, the 131-residue chain is Fluoride-specific ion channel FluC (131 aa).

The next 3 membrane-spanning stretches (helical) occupy residues 3 to 23, 34 to 54, and 62 to 82; these read AAAN…GAWL, IFLT…LLMG, and AVPA…LGGL. Residues Gly-80 and Thr-83 each coordinate Na(+). The helical transmembrane segment at 101–121 threads the bilayer; that stretch reads WGWLALHAAVHVAGSLLMAWI.

Belongs to the fluoride channel Fluc/FEX (TC 1.A.43) family.

It is found in the cell inner membrane. It carries out the reaction fluoride(in) = fluoride(out). With respect to regulation, na(+) is not transported, but it plays an essential structural role and its presence is essential for fluoride channel function. Its function is as follows. Fluoride-specific ion channel. Important for reducing fluoride concentration in the cell, thus reducing its toxicity. In Aromatoleum aromaticum (strain DSM 19018 / LMG 30748 / EbN1) (Azoarcus sp. (strain EbN1)), this protein is Fluoride-specific ion channel FluC.